Consider the following 314-residue polypeptide: tRNA pseudouridine synthase B (314 aa).

D41 (nucleophile) is an active-site residue.

This sequence belongs to the pseudouridine synthase TruB family. Type 1 subfamily.

The enzyme catalyses uridine(55) in tRNA = pseudouridine(55) in tRNA. Responsible for synthesis of pseudouridine from uracil-55 in the psi GC loop of transfer RNAs. In Prochlorococcus marinus (strain NATL1A), this protein is tRNA pseudouridine synthase B.